The sequence spans 99 residues: Small ribosomal subunit protein bS20 (99 aa).

It belongs to the bacterial ribosomal protein bS20 family.

Its function is as follows. Binds directly to 16S ribosomal RNA. The chain is Small ribosomal subunit protein bS20 from Thermotoga neapolitana (strain ATCC 49049 / DSM 4359 / NBRC 107923 / NS-E).